Here is a 412-residue protein sequence, read N- to C-terminus: Subtilisin-like protease 6 (412 aa).

An N-terminal signal peptide occupies residues 1-20; that stretch reads MGFITKAIPIVLAALSTVNG. A propeptide spanning residues 21 to 127 is cleaved from the precursor; that stretch reads ARILEAGPHA…VRATTNGTNL (107 aa). In terms of domain architecture, Inhibitor I9 spans 36-120; it reads KYIVVMKKDV…FIEPDFVVRA (85 aa). Positions 135–412 constitute a Peptidase S8 domain; the sequence is SWGLARVSTR…SKLIYNGSGK (278 aa). Catalysis depends on charge relay system residues aspartate 167 and histidine 198. Residues asparagine 252, asparagine 264, and asparagine 325 are each glycosylated (N-linked (GlcNAc...) asparagine). Serine 358 (charge relay system) is an active-site residue. N-linked (GlcNAc...) asparagine glycosylation is present at asparagine 408.

The protein belongs to the peptidase S8 family.

The protein localises to the secreted. In terms of biological role, secreted subtilisin-like serine protease with keratinolytic activity that contributes to pathogenicity. This Trichophyton verrucosum (strain HKI 0517) protein is Subtilisin-like protease 6 (SUB6).